The sequence spans 172 residues: Large ribosomal subunit protein bL17 (172 aa).

The disordered stretch occupies residues 153 to 172 (AQAAEPVAAAEPATPATTAG).

The protein belongs to the bacterial ribosomal protein bL17 family. As to quaternary structure, part of the 50S ribosomal subunit. Contacts protein L32.

The sequence is that of Large ribosomal subunit protein bL17 from Sorangium cellulosum (strain So ce56) (Polyangium cellulosum (strain So ce56)).